The sequence spans 407 residues: 41 kDa spicule matrix protein (407 aa).

Residues 1 to 17 form the signal peptide; sequence MKGVLFIVASLVAFATG. In terms of domain architecture, C-type lectin spans 29–160; it reads SGQSCYRYFN…PGRAPVMKRQ (132 aa). 2 disordered regions span residues 143–176 and 204–407; these read PQNPMSGPPGRAPVMKRQNPPVRPGQGGRQIPQG and IGQQ…DALA. Residues 223–369 are compositionally biased toward gly residues; it reads NQPGMGGRQP…MGGRQPGMGG (147 aa). Low complexity predominate over residues 370–398; sequence QQPNNPNNPNNPNNPNNPNNPNPRFNRPR.

It belongs to the SM50 family. As to expression, expressed specifically in the micromere/primary mesenchyme cells (PMC) lineage.

The protein resides in the secreted. Major matrix protein of the sea urchin embryo spicule which directs crystal growth in certain orientations and inhibit growth in others. This is 41 kDa spicule matrix protein from Hemicentrotus pulcherrimus (Sea urchin).